The sequence spans 53 residues: MPITDPVKLQIVYNRVLNKKVCRKCGALNPPTATKCRRCKSKNLRPKKGFKLK.

It belongs to the eukaryotic ribosomal protein eL40 family.

The sequence is that of Large ribosomal subunit protein eL40 from Staphylothermus marinus (strain ATCC 43588 / DSM 3639 / JCM 9404 / F1).